Here is a 349-residue protein sequence, read N- to C-terminus: tRNA pseudouridine synthase D (349 aa).

Residue phenylalanine 27 participates in substrate binding. Aspartate 80 serves as the catalytic Nucleophile. Asparagine 129 lines the substrate pocket. One can recognise a TRUD domain in the interval 155 to 303; sequence GVPNYFGAQR…VEAARRAMLL (149 aa). Phenylalanine 329 lines the substrate pocket.

This sequence belongs to the pseudouridine synthase TruD family.

It catalyses the reaction uridine(13) in tRNA = pseudouridine(13) in tRNA. Functionally, responsible for synthesis of pseudouridine from uracil-13 in transfer RNAs. This Shigella flexneri protein is tRNA pseudouridine synthase D.